Reading from the N-terminus, the 514-residue chain is M-phase inducer phosphatase 1 (514 aa).

The Phosphodegron signature appears at 73 to 83; it reads MGSSESTDSGF. S75 bears the Phosphoserine; by CHEK1 mark. Phosphoserine; by NEK11 occurs at positions 78, 81, and 87. At S106 the chain carries Phosphoserine. A Phosphoserine; by CHEK1 and CHEK2 modification is found at S123. The short motif at 140 to 142 is the KEN box element; it reads KEN. Position 172 is a phosphoserine; by CHEK1 (S172). Residues 256–308 form a disordered region; sequence PCGSSTRAVLKRADRSHEEPPRGTKRRKSVPSPVKAKADVPEPAQLPSQSLSL. A compositionally biased stretch (basic and acidic residues) spans 266–277; that stretch reads KRADRSHEEPPR. 2 positions are modified to phosphoserine; by CHEK1 and CHEK2: S271 and S284. At S311 the chain carries Phosphoserine. The 107-residue stretch at 366-472 folds into the Rhodanese domain; sequence LIKEFVIIDC…FFLKCQSHCE (107 aa). Residue C421 is part of the active site. At T497 the chain carries Phosphothreonine; by CHEK1. Phosphoserine; by PLK3 is present on residues S503 and S509.

It belongs to the MPI phosphatase family. Interacts with CCNB1/cyclin B1. Interacts with YWHAE/14-3-3 epsilon when phosphorylated. Interacts with CUL1 specifically when CUL1 is neddylated and active. Interacts with BTRC/BTRCP1 and FBXW11/BTRCP2. Interactions with CUL1, BTRC and FBXW11 are enhanced upon DNA damage. Interacts with CHEK2; mediates CDC25A phosphorylation and degradation in response to infrared-induced DNA damages. Interacts with HSP90AB1; prevents heat shock-mediated CDC25A degradation and contributes to cell cycle progression. Phosphorylated by CHEK1 on Ser-75, Ser-123, Ser-172, Ser-271, Ser-284 and Thr-497 during checkpoint mediated cell cycle arrest. Also phosphorylated by CHEK2 on Ser-123, Ser-271, and Ser-284 during checkpoint mediated cell cycle arrest. Phosphorylation on Ser-172 and Thr-497 creates binding sites for YWHAE/14-3-3 epsilon which inhibits CDC25A. Phosphorylation on Ser-75, Ser-123, Ser-172, Ser-271 and Ser-284 may also promote ubiquitin-dependent proteolysis of CDC25A by the SCF complex. Phosphorylation of CDC25A at Ser-75 by CHEK1 primes it for subsequent phosphorylation at Ser-75, Ser-81 and Ser-87 by NEK11. Phosphorylation by NEK11 is required for BTRC-mediated polyubiquitination and degradation. Phosphorylation by PIM1 leads to an increase in phosphatase activity. Phosphorylated by PLK3 following DNA damage, leading to promote its ubiquitination and degradation. In terms of processing, ubiquitinated by the anaphase promoting complex/cyclosome (APC/C) ubiquitin ligase complex that contains FZR1/CDH1 during G1 phase leading to its degradation by the proteasome. Ubiquitinated by a SCF complex containing BTRC and FBXW11 during S phase leading to its degradation by the proteasome. Deubiquitination by USP17L2/DUB3 leads to its stabilization. Ubiquitously expressed in most developing tissue. High levels in the testis and lower levels in the ovary, particularly in germ cells. Lower levels also in kidney, liver, heart and muscle.

The enzyme catalyses O-phospho-L-tyrosyl-[protein] + H2O = L-tyrosyl-[protein] + phosphate. Stimulated by B-type cyclins. Stimulated by PIM1-mediated phosphorylation. Functionally, tyrosine protein phosphatase which functions as a dosage-dependent inducer of mitotic progression. Directly dephosphorylates CDK1 and stimulates its kinase activity. Also dephosphorylates CDK2 in complex with cyclin-E, in vitro. The protein is M-phase inducer phosphatase 1 (Cdc25a) of Mus musculus (Mouse).